The following is a 252-amino-acid chain: Imidazole glycerol phosphate synthase subunit HisF (252 aa).

Active-site residues include aspartate 11 and aspartate 130.

The protein belongs to the HisA/HisF family. In terms of assembly, heterodimer of HisH and HisF.

Its subcellular location is the cytoplasm. It catalyses the reaction 5-[(5-phospho-1-deoxy-D-ribulos-1-ylimino)methylamino]-1-(5-phospho-beta-D-ribosyl)imidazole-4-carboxamide + L-glutamine = D-erythro-1-(imidazol-4-yl)glycerol 3-phosphate + 5-amino-1-(5-phospho-beta-D-ribosyl)imidazole-4-carboxamide + L-glutamate + H(+). The protein operates within amino-acid biosynthesis; L-histidine biosynthesis; L-histidine from 5-phospho-alpha-D-ribose 1-diphosphate: step 5/9. Its function is as follows. IGPS catalyzes the conversion of PRFAR and glutamine to IGP, AICAR and glutamate. The HisF subunit catalyzes the cyclization activity that produces IGP and AICAR from PRFAR using the ammonia provided by the HisH subunit. In Lacticaseibacillus paracasei (strain ATCC 334 / BCRC 17002 / CCUG 31169 / CIP 107868 / KCTC 3260 / NRRL B-441) (Lactobacillus paracasei), this protein is Imidazole glycerol phosphate synthase subunit HisF.